A 141-amino-acid chain; its full sequence is Large ribosomal subunit protein uL11 (141 aa).

This sequence belongs to the universal ribosomal protein uL11 family. In terms of assembly, part of the ribosomal stalk of the 50S ribosomal subunit. Interacts with L10 and the large rRNA to form the base of the stalk. L10 forms an elongated spine to which L12 dimers bind in a sequential fashion forming a multimeric L10(L12)X complex. One or more lysine residues are methylated.

Its function is as follows. Forms part of the ribosomal stalk which helps the ribosome interact with GTP-bound translation factors. This chain is Large ribosomal subunit protein uL11, found in Parasynechococcus marenigrum (strain WH8102).